Reading from the N-terminus, the 261-residue chain is Ribonuclease HII (261 aa).

The span at 1–20 (MIRDKSAKRPAKDAPKKAAV) shows a compositional bias: basic and acidic residues. The disordered stretch occupies residues 1–23 (MIRDKSAKRPAKDAPKKAAVKEA). The RNase H type-2 domain maps to 42 to 230 (WPVAGCDEAG…VAAARAKHMP (189 aa)). 3 residues coordinate a divalent metal cation: Asp-48, Glu-49, and Asp-139.

The protein belongs to the RNase HII family. Requires Mn(2+) as cofactor. Mg(2+) is required as a cofactor.

It localises to the cytoplasm. The catalysed reaction is Endonucleolytic cleavage to 5'-phosphomonoester.. In terms of biological role, endonuclease that specifically degrades the RNA of RNA-DNA hybrids. This is Ribonuclease HII from Bradyrhizobium diazoefficiens (strain JCM 10833 / BCRC 13528 / IAM 13628 / NBRC 14792 / USDA 110).